The chain runs to 199 residues: Superoxide dismutase [Fe] (199 aa).

His27, His74, Asp158, and His162 together coordinate Fe cation.

It belongs to the iron/manganese superoxide dismutase family. In terms of assembly, homodimer. Fe cation is required as a cofactor.

The catalysed reaction is 2 superoxide + 2 H(+) = H2O2 + O2. Destroys superoxide anion radicals which are normally produced within the cells and which are toxic to biological systems. This Babesia bovis protein is Superoxide dismutase [Fe] (SODB).